The sequence spans 365 residues: 3-dehydroquinate synthase (365 aa).

NAD(+) is bound by residues 107–111 (GVIGD), 131–132 (TT), Lys-144, and Lys-153. Positions 186, 251, and 268 each coordinate Zn(2+).

This sequence belongs to the sugar phosphate cyclases superfamily. Dehydroquinate synthase family. Co(2+) is required as a cofactor. Requires Zn(2+) as cofactor. The cofactor is NAD(+).

It is found in the cytoplasm. The catalysed reaction is 7-phospho-2-dehydro-3-deoxy-D-arabino-heptonate = 3-dehydroquinate + phosphate. The protein operates within metabolic intermediate biosynthesis; chorismate biosynthesis; chorismate from D-erythrose 4-phosphate and phosphoenolpyruvate: step 2/7. Catalyzes the conversion of 3-deoxy-D-arabino-heptulosonate 7-phosphate (DAHP) to dehydroquinate (DHQ). This chain is 3-dehydroquinate synthase, found in Picosynechococcus sp. (strain ATCC 27264 / PCC 7002 / PR-6) (Agmenellum quadruplicatum).